A 565-amino-acid polypeptide reads, in one-letter code: CTP synthase (565 aa).

The segment at 1 to 272 (MARPKNVKHI…DLRVLKKLGL (272 aa)) is amidoligase domain. S18 is a binding site for CTP. S18 contributes to the UTP binding site. 19 to 24 (SLGKGI) contacts ATP. An L-glutamine-binding site is contributed by Y59. D76 is an ATP binding site. Residues D76 and E146 each coordinate Mg(2+). Residues 153–155 (DIE), 193–198 (KTKPTQ), and K229 contribute to the CTP site. UTP contacts are provided by residues 193–198 (KTKPTQ) and K229. In terms of domain architecture, Glutamine amidotransferase type-1 spans 299 to 543 (TIGICGKYTE…VAAAKEYAHG (245 aa)). G363 is an L-glutamine binding site. C390 (nucleophile; for glutamine hydrolysis) is an active-site residue. L-glutamine-binding positions include 391-394 (LGMQ), E414, and R471. Residues H516 and E518 contribute to the active site.

Belongs to the CTP synthase family. As to quaternary structure, homotetramer.

The enzyme catalyses UTP + L-glutamine + ATP + H2O = CTP + L-glutamate + ADP + phosphate + 2 H(+). It carries out the reaction L-glutamine + H2O = L-glutamate + NH4(+). The catalysed reaction is UTP + NH4(+) + ATP = CTP + ADP + phosphate + 2 H(+). It functions in the pathway pyrimidine metabolism; CTP biosynthesis via de novo pathway; CTP from UDP: step 2/2. Its activity is regulated as follows. Allosterically activated by GTP, when glutamine is the substrate; GTP has no effect on the reaction when ammonia is the substrate. The allosteric effector GTP functions by stabilizing the protein conformation that binds the tetrahedral intermediate(s) formed during glutamine hydrolysis. Inhibited by the product CTP, via allosteric rather than competitive inhibition. Its function is as follows. Catalyzes the ATP-dependent amination of UTP to CTP with either L-glutamine or ammonia as the source of nitrogen. Regulates intracellular CTP levels through interactions with the four ribonucleotide triphosphates. The chain is CTP synthase from Pelodictyon phaeoclathratiforme (strain DSM 5477 / BU-1).